A 280-amino-acid chain; its full sequence is MAFSSLSPLPMKSLDISRSSSSVSRSPYHFQRYLLRRLQLSSRSNLEIKDSSNTREGCCSSAESNTWKRILSAAMAAAVIASSSGVPAMAELNRFEADTRGEFGIGSAAQYGSADLSKTVHSNENFRRANFTSADMRESDFSGSTFNGAYLEKAVAYKANFSGADLSDTLMDRMVLNEANLTNAVLVRSVLTRSDLGGAKIEGADFSDAVIDLLQKQALCKYATGTNPLTGVDTRKSLGCGNSRRNAYGSPSSPLLSAPPQRLLGRDGFCDEKTGLCDVK.

A chloroplast-targeting transit peptide spans 1 to 59 (MAFSSLSPLPMKSLDISRSSSSVSRSPYHFQRYLLRRLQLSSRSNLEIKDSSNTREGCC). Residues 60 to 90 (SSAESNTWKRILSAAMAAAVIASSSGVPAMA) constitute a thylakoid transit peptide. 2 Pentapeptide repeat domains span residues 124–163 (ENFR…NFSG) and 169–208 (TLMD…DFSD).

As to quaternary structure, interacts with thioredoxin. Interacts in vitro with LTO1.

The protein localises to the plastid. It is found in the chloroplast thylakoid lumen. Its function is as follows. Pentapeptide repeat protein of unknown function. Subject to degradation when reduced. The chain is Thylakoid lumenal protein TL20.3, chloroplastic from Arabidopsis thaliana (Mouse-ear cress).